Here is a 231-residue protein sequence, read N- to C-terminus: MSRPGTYVIGLTLLVGLVVGNPGCPRSYRPLTLDYRLNPVAVIGDSYTTGTDEGGLGSKSWTARTWQMLAARGVRIAADVAAEGRAGYGVPGDHGNVFEDLTARAVQPDDALVVFFGSRNDQGMDPEDPEMLAEKVRDTFDLARHRAPSASLLVIAPPWPTADVPGPMLRIRDVLGAQARAAGAVFVDPIADHWFVDRPELIGADGVHPNDAGHEYLADKIAPLISMELVG.

The signal sequence occupies residues 1–20; it reads MSRPGTYVIGLTLLVGLVVG. The active-site Nucleophile is serine 46. The active-site Proton donor is the aspartate 205. Catalysis depends on histidine 208, which acts as the Proton acceptor.

Belongs to the 'GDSL' lipolytic enzyme family.

The protein localises to the secreted. It localises to the cell wall. It is found in the extracellular space. It carries out the reaction a fatty acid ester + H2O = an aliphatic alcohol + a fatty acid + H(+). The enzyme catalyses decanoate ester + H2O = decanoate + an aliphatic alcohol + H(+). The catalysed reaction is an octanoate ester + H2O = an aliphatic alcohol + octanoate + H(+). It catalyses the reaction a dodecanoate ester + H2O = an aliphatic alcohol + dodecanoate + H(+). It carries out the reaction a tetradecanoate ester + H2O = an aliphatic alcohol + tetradecanoate + H(+). Its activity is regulated as follows. Activity is inhibited by the serine modifier phenylmethylsulfonyl fluoride (PMSF). Functionally, GDSL lipase that catalyzes the hydrolysis of p-nitrophenyl (pNP) esters. pNP-decanoate (C10) is the preferred substrate. It can also use pNP-octanoate (C8), pNP-dodecanoate (C12) and pNP-tetradecanoate (C14). Has lower activity with pNP-butyrate (C4), pNP-palmitate (C16) and pNP-stearate (C18). Does not show phospholipase A1 activity. Might help bacteria to utilize available lipids for its growth as well as provide resistance to various intracellular stresses by cell wall modulation resulting in enhanced intracellular survival. This Mycobacterium tuberculosis (strain ATCC 25618 / H37Rv) protein is GDSL lipase Rv0518.